A 1188-amino-acid chain; its full sequence is Meiotically up-regulated gene 190 protein (1188 aa).

Positions 1–11 (MSTHSGDSTKQ) are enriched in polar residues. Disordered regions lie at residues 1 to 61 (MSTH…DPIT) and 83 to 125 (FTVP…EADN). Over residues 41–61 (EKKEEQQREQTENEKLFDPIT) the composition is skewed to basic and acidic residues. Positions 84–112 (TVPNQSIQGSSLPSEKPYLSSNQPTNVYK) are enriched in polar residues. Residues 173–193 (LVISWFFTHSIIISAVLPLAI) traverse the membrane as a helical segment. In terms of domain architecture, SMP-LTD spans 228 to 453 (IPESAEWMNH…SPKSMTIDLS (226 aa)). The tract at residues 298 to 318 (ASESFSEKQASEAEHKDEPEQ) is disordered. A compositionally biased stretch (basic and acidic residues) spans 302–318 (FSEKQASEAEHKDEPEQ). C2 domains follow at residues 451 to 576 (DLSK…ERCD) and 636 to 781 (KEEE…TKWY). Ca(2+) is bound by residues D485, D491, D544, D546, S549, and D552. Disordered regions lie at residues 615 to 639 (TIPR…KEEE) and 1002 to 1066 (QRAS…GTMN). Position 1005 is a phosphoserine (S1005). Residues 1022–1032 (DDSVDTEDEET) are compositionally biased toward acidic residues.

The cofactor is Ca(2+).

The protein localises to the cytoplasm. It is found in the endoplasmic reticulum membrane. Its subcellular location is the nucleus membrane. The protein resides in the cytoskeleton. It localises to the microtubule organizing center. The protein localises to the spindle pole body. Functionally, has a role in meiosis. The protein is Meiotically up-regulated gene 190 protein (mug190) of Schizosaccharomyces pombe (strain 972 / ATCC 24843) (Fission yeast).